The following is a 654-amino-acid chain: NADPH-dependent diflavin oxidoreductase 1 (654 aa).

Residues 14–166 enclose the Flavodoxin-like domain; sequence ALVLYGSETG…TFIPWITDFR (153 aa). FMN contacts are provided by residues 20-25, 75-78, and 113-122; these read SETGNA, STTG, and LGDSSYPKFN. An FAD-binding FR-type domain is found at 235 to 485; that stretch reads PDALTATLVE…QLQRGGLSSS (251 aa). FAD contacts are provided by residues Arg-389, 419 to 422, and 458 to 461; these read RQFS and GVCT. NADP(+)-binding positions include Thr-500, 568–569, and 574–578; these read SR and KIYVQ. Residue Trp-654 participates in FAD binding.

The protein belongs to the NADPH-dependent diflavin oxidoreductase NDOR1 family. This sequence in the N-terminal section; belongs to the flavodoxin family. It in the C-terminal section; belongs to the flavoprotein pyridine nucleotide cytochrome reductase family. Interacts with dre2; as part of the cytosolic iron-sulfur (Fe-S) protein assembly (CIA) machinery. Requires FAD as cofactor. It depends on FMN as a cofactor.

The protein localises to the cytoplasm. The protein resides in the mitochondrion. It catalyses the reaction 2 oxidized [2Fe-2S]-[protein] + NADPH = 2 reduced [2Fe-2S]-[protein] + NADP(+) + H(+). In terms of biological role, NADPH-dependent reductase which is a central component of the cytosolic iron-sulfur (Fe-S) protein assembly (CIA) machinery. Transfers electrons from NADPH via its FAD and FMN prosthetic groups to the [2Fe-2S] cluster of dre2, another key component of the CIA machinery. In turn, this reduced cluster provides electrons for assembly of cytosolic iron-sulfur cluster proteins. Positively controls H(2)O(2)-induced cell death. This chain is NADPH-dependent diflavin oxidoreductase 1, found in Aspergillus fumigatus (strain ATCC MYA-4609 / CBS 101355 / FGSC A1100 / Af293) (Neosartorya fumigata).